Reading from the N-terminus, the 220-residue chain is uncharacterized protein (220 aa).

This is an uncharacterized protein from Archaeoglobus fulgidus (strain ATCC 49558 / DSM 4304 / JCM 9628 / NBRC 100126 / VC-16).